The following is a 504-amino-acid chain: ADP,ATP carrier protein 3 (504 aa).

Helical transmembrane passes span 23-43 (LKLFIPMALMMLCILFNFGAL), 59-79 (IISFLKLWLVLPACVIFTILY), 90-110 (YVFYIIVGSFLLFFLFFAYII), 146-166 (YGLMYIFAELWSAVVINLMFW), 183-203 (PVLGMVGNIGLILAGSVLVFF), 230-250 (EMLQPIMSIIVAAGVISMLLF), 296-316 (IALLIICYGLLINIVEGPWKA), 329-349 (VHFMGRFNILMGISCVTFMII), 364-384 (LLTPIMLSITGLMFFIFIIFI), 386-406 (EIGSCFGNFNLLYAAIIVGAI), 449-469 (FGKSLGAFIQSLIFIIIPTAT), and 473-493 (IIIYLLVIFIVMISLWIWDVV).

The protein belongs to the ADP/ATP translocase tlc family.

The protein resides in the cell membrane. Provides the rickettsial cell with host ATP in exchange for rickettsial ADP. This is an obligate exchange system. This energy acquiring activity is an important component of rickettsial parasitism. The polypeptide is ADP,ATP carrier protein 3 (tlcC) (Rickettsia bellii (strain RML369-C)).